Here is a 576-residue protein sequence, read N- to C-terminus: Arginine--tRNA ligase (576 aa).

The 'HIGH' region motif lies at 126–136 (ANPTGPMHIGH).

This sequence belongs to the class-I aminoacyl-tRNA synthetase family. As to quaternary structure, monomer.

Its subcellular location is the cytoplasm. The enzyme catalyses tRNA(Arg) + L-arginine + ATP = L-arginyl-tRNA(Arg) + AMP + diphosphate. The chain is Arginine--tRNA ligase from Rickettsia typhi (strain ATCC VR-144 / Wilmington).